A 31-amino-acid polypeptide reads, in one-letter code: Monocyclic monoterpene ketone monooxygenase (31 aa).

20–25 provides a ligand contact to FAD; sequence GAGFXG.

As to quaternary structure, monomer. FAD is required as a cofactor.

The enzyme catalyses 1-hydroxylimonen-2-one + NADPH + O2 = 3-isopropenyl-6-oxoheptanoate + NADP(+) + H2O. It catalyses the reaction (1R,4S)-1-hydroxylimonen-2-one + NADPH + O2 + H(+) = (4S,7S)-7-hydroxy-4-isopropenyl-7-methyloxepan-2-one + NADP(+) + H2O. The catalysed reaction is (1S,4R)-1-hydroxylimonen-2-one + NADPH + O2 + H(+) = (4R,7R)-7-hydroxy-4-isopropenyl-7-methyloxepan-2-one + NADP(+) + H2O. It carries out the reaction (1R,4R)-dihydrocarvone + NADPH + O2 + H(+) = (4R,7R)-4-isopropenyl-7-methyloxepan-2-one + NADP(+) + H2O. The enzyme catalyses (1S,4R)-menthone + NADPH + O2 + H(+) = (4S,7R)-7-isopropyl-4-methyloxepan-2-one + NADP(+) + H2O. It catalyses the reaction (1R,4S)-menthone + NADPH + O2 + H(+) = (4R,7S)-7-isopropyl-4-methyloxepan-2-one + NADP(+) + H2O. The catalysed reaction is (1S,4R)-isodihydrocarvone + NADPH + O2 + H(+) = (3S,6R)-6-isopropenyl-3-methyloxepan-2-one + NADP(+) + H2O. It functions in the pathway terpene metabolism; monoterpene degradation. Its function is as follows. Catalyzes the NADPH- and oxygen-dependent oxidation of the monocyclic monoterpene ketones 1-hydroxy-2-oxolimonene, dihydrocarvone and menthone. Is able to convert all enantiomers of these natural substrates with almost equal efficiency. Is thus involved in the conversion of the monocyclic monoterpene ketone intermediates formed in the degradation pathways of all stereoisomers of three different monocyclic monoterpenes, i.e. limonene, (dihydro)carveol and menthol, which likely make R.erythropolis able to grow on these compounds as the sole source of carbon and energy. The polypeptide is Monocyclic monoterpene ketone monooxygenase (Rhodococcus erythropolis (Arthrobacter picolinophilus)).